Consider the following 878-residue polypeptide: Leucine--tRNA ligase (878 aa).

Positions 1 to 14 are enriched in low complexity; the sequence is MTASKSSSATASAS. The tract at residues 1–23 is disordered; sequence MTASKSSSATASASDRPDRYDPI. The 'HIGH' region signature appears at 58 to 68; the sequence is PYPSGSLHMGH. Positions 632–636 match the 'KMSKS' region motif; the sequence is KMSKS. K635 lines the ATP pocket.

The protein belongs to the class-I aminoacyl-tRNA synthetase family.

Its subcellular location is the cytoplasm. It catalyses the reaction tRNA(Leu) + L-leucine + ATP = L-leucyl-tRNA(Leu) + AMP + diphosphate. The sequence is that of Leucine--tRNA ligase from Synechococcus sp. (strain WH7803).